The following is a 469-amino-acid chain: Pancreatic lipase-related protein 2 (469 aa).

Residues 1-17 form the signal peptide; that stretch reads MLPSWTIGLLLLATVRG. Cysteine 21 and cysteine 27 form a disulfide bridge. Asparagine 71 carries an N-linked (GlcNAc...) asparagine glycan. Positions 93–105 are required for galactolipase activity; that stretch reads IHGFIDDGDSGWP. Cysteines 109 and 120 form a disulfide. Catalysis depends on serine 171, which acts as the Nucleophile. Aspartate 195 serves as the catalytic Charge relay system. Ca(2+) is bound by residues glutamate 206, arginine 209, aspartate 211, and aspartate 214. Cysteine 256 and cysteine 280 are oxidised to a cystine. The interval 257–279 is required for galactolipase activity; it reads QKNILSTIIDINGIWQGIQDFVA. The active-site Charge relay system is the histidine 282. Intrachain disulfides connect cysteine 304/cysteine 315 and cysteine 318/cysteine 323. N-linked (GlcNAc...) asparagine glycosylation is found at asparagine 353, asparagine 399, and asparagine 455. The PLAT domain maps to 357–469; the sequence is WRYRVSVTLA…ENALQTLYPC (113 aa). Cysteine 453 and cysteine 469 form a disulfide bridge.

Belongs to the AB hydrolase superfamily. Lipase family.

It is found in the secreted. It localises to the zymogen granule membrane. The protein resides in the cell projection. Its subcellular location is the neuron projection. The enzyme catalyses a triacylglycerol + H2O = a diacylglycerol + a fatty acid + H(+). The catalysed reaction is a 1,2-diacyl-3-O-(beta-D-galactosyl)-sn-glycerol + 2 H2O = 3-beta-D-galactosyl-sn-glycerol + 2 a fatty acid + 2 H(+). It carries out the reaction 1,2,3-tri-(9Z-octadecenoyl)-glycerol + H2O = di-(9Z)-octadecenoylglycerol + (9Z)-octadecenoate + H(+). It catalyses the reaction di-(9Z)-octadecenoylglycerol + H2O = (9Z-octadecenoyl)-glycerol + (9Z)-octadecenoate + H(+). The enzyme catalyses (9Z-octadecenoyl)-glycerol + H2O = glycerol + (9Z)-octadecenoate + H(+). The catalysed reaction is 1-(9Z-octadecenoyl)-glycerol + H2O = glycerol + (9Z)-octadecenoate + H(+). It carries out the reaction 1,2,3-tripropanoylglycerol + H2O = dipropanoylglycerol + propanoate + H(+). It catalyses the reaction 1,2,3-tributanoylglycerol + H2O = dibutanoylglycerol + butanoate + H(+). The enzyme catalyses 1,2,3-trioctanoylglycerol + H2O = dioctanoylglycerol + octanoate + H(+). The catalysed reaction is 1,2-didecanoylglycerol + H2O = decanoylglycerol + decanoate + H(+). It carries out the reaction long chain 1,2-diacyl-3-O-beta-D-galactosyl-sn-glycerol + H2O = long chain acyl-3-O-beta-D-galactosyl-sn-glycerol + a fatty acid + H(+). It catalyses the reaction 1,2-dioctanoyl-3-O-beta-D-galactosyl-sn-glycerol + H2O = octanoyl-3-(beta-D-galactosyl)-sn-glycerol + octanoate + H(+). The enzyme catalyses 1,2-didodecanoyl-3-beta-D-galactosyl-sn-glycerol + H2O = dodecanoyl-3-beta-D-galactosyl-sn-glycerol + dodecanoate + H(+). The catalysed reaction is 1-beta-D-galactosyl-2,3-didodecanoyl-sn-glycerol + H2O = 1-beta-D-galactosyl-dodecanoyl-sn-glycerol + dodecanoate + H(+). It carries out the reaction a 1,2-diacyl-3-O-[alpha-D-galactosyl-(1-&gt;6)-beta-D-galactosyl]-sn-glycerol + H2O = acyl-3-O-[alpha-D-galactosyl-(1-&gt;6)-beta-D-galactosyl]-sn-glycerol + a fatty acid + H(+). It catalyses the reaction long chain 1,2-diacyl-3-O-[alpha-D-galactosyl-(1-&gt;6)-beta-D-galactosyl]-sn-glycerol + H2O = long chain acyl-3-O-[alpha-D-galactosyl-(1-&gt;6)-beta-D-galactosyl]-sn-glycerol + a fatty acid + H(+). The enzyme catalyses 1,2-dioctanoyl-3-O-[alpha-D-galactosyl-(1-&gt;6)-beta-D-galactosyl]-sn-glycerol + H2O = octanoyl-3-O-[alpha-D-galactosyl-(1-&gt;6)-beta-D-galactosyl]-sn-glycerol + octanoate + H(+). The catalysed reaction is 1,2-didodecanoyl-3-O-[alpha-D-galactosyl-(1-&gt;6)-beta-D-galactosyl]-sn-glycerol + H2O = dodecanoyl-3-O-[alpha-D-galactosyl-(1-&gt;6)-beta-D-galactosyl]-sn-glycerol + dodecanoate + H(+). It carries out the reaction a 1,2-diacyl-sn-glycero-3-phosphocholine + H2O = a monoacyl-sn-glycero-3-phosphocholine + a fatty acid + H(+). It participates in glycerolipid metabolism; triacylglycerol degradation. Its pathway is glycolipid metabolism. Lipase that primarily hydrolyzes triglycerides and galactosylglycerides. In neonates, may play a major role in pancreatic digestion of dietary fats such as milk fat globules enriched in long-chain triglycerides. Hydrolyzes short-, medium- and long-chain fatty acyls in triglycerides without apparent positional specificity. Can completely deacylate triacylglycerols. When the liver matures and bile salt synthesis increases, likely functions mainly as a galactolipase and monoacylglycerol lipase. Hydrolyzes monogalactosyldiglycerols (MGDG) and digalactosyldiacylglycerols (DGDG) present in a plant-based diet, releasing long-chain polyunsaturated fatty acids. Hydrolyzes medium- and long-chain fatty acyls in galactolipids. May act together with LIPF to hydrolyze partially digested triglycerides. Hydrolyzes long-chain monoglycerides with high efficiency. In cytotoxic T cells, contributes to perforin-dependent cell lysis, but is unlikely to mediate direct cytotoxicity. Also has low phospholipase activity. In neurons, required for the localization of the phospholipid 1-oleoyl-2-palmitoyl-PC (OPPC) to neurite tips through acyl chain remodeling of membrane phospholipids. The resulting OPPC-rich lipid membrane domain recruits the t-SNARE protein STX4 by selectively interacting with the STX4 transmembrane domain and this promotes surface expression of the dopamine transporter SLC6A3/DAT at neurite tips by facilitating fusion of SLC6A3-containing transport vesicles with the plasma membrane. This chain is Pancreatic lipase-related protein 2, found in Bos taurus (Bovine).